A 541-amino-acid chain; its full sequence is Synaptotagmin-1 (541 aa).

At 1 to 11 the chain is on the extracellular side; that stretch reads MGFFSTILGFC. Residues 12 to 32 traverse the membrane as a helical segment; that stretch reads GFGVGISLGLVIGYVLFVYLL. Residues 33-541 are Cytoplasmic-facing; sequence PNDVKDPEIR…QIELEWRTAS (509 aa). One can recognise an SMP-LTD domain in the interval 67-249; that stretch reads DFDRVDWINR…WPKTLVVPIL (183 aa). The tract at residues 227-509 is phospholipid binding; the sequence is QEQIKDQVAN…TLGYVDIPVV (283 aa). C2 domains lie at 240 to 362 and 401 to 521; these read WPKT…AFTL and GFEE…NQKF. Residues aspartate 276, aspartate 282, aspartate 332, and glutamate 334 each coordinate Ca(2+).

It belongs to the synaptotagmin family. Interacts with cabbage leaf curl virus (CaLCuV) BC1 protein and tobacco mosaic virus (TMV) MP protein. Interacts with ROSY1. Ca(2+) is required as a cofactor. Expressed in roots, shoots, rosette and cauline leaves, inflorescences, and siliques. In roots, expressed in vascular bundle, epidermis, the differential zone of the tips of root hairs, and the quiescent center and columella of root tips.

It localises to the cell membrane. The protein localises to the endosome membrane. In terms of biological role, plays an important role in maintaining plasma membrane integrity during freezing and osmotic stresses. May function in membrane resealing during calcium-dependent freezing tolerance. May regulate endocytosis and endosome recycling at the plasma membrane and cell-to-cell trafficking of cabbage leaf curl virus (CaLCuV) and tobacco mosaic virus (TMV) movement proteins via plasmodesmata. In Arabidopsis thaliana (Mouse-ear cress), this protein is Synaptotagmin-1 (SYT1).